Consider the following 365-residue polypeptide: Histidinol-phosphate aminotransferase (365 aa).

Residue lysine 227 is modified to N6-(pyridoxal phosphate)lysine.

Belongs to the class-II pyridoxal-phosphate-dependent aminotransferase family. Histidinol-phosphate aminotransferase subfamily. As to quaternary structure, homodimer. It depends on pyridoxal 5'-phosphate as a cofactor.

It catalyses the reaction L-histidinol phosphate + 2-oxoglutarate = 3-(imidazol-4-yl)-2-oxopropyl phosphate + L-glutamate. The protein operates within amino-acid biosynthesis; L-histidine biosynthesis; L-histidine from 5-phospho-alpha-D-ribose 1-diphosphate: step 7/9. This Polaromonas naphthalenivorans (strain CJ2) protein is Histidinol-phosphate aminotransferase.